The sequence spans 128 residues: 3-aminoacrylate deaminase RutC (128 aa).

Belongs to the RutC family.

It carries out the reaction (Z)-3-aminoacrylate + H2O + H(+) = 3-oxopropanoate + NH4(+). Functionally, involved in pyrimidine catabolism. Catalyzes the deamination of 3-aminoacrylate to malonic semialdehyde, a reaction that can also occur spontaneously. RutC may facilitate the reaction and modulate the metabolic fitness, rather than catalyzing essential functions. This is 3-aminoacrylate deaminase RutC from Enterobacter sp. (strain 638).